We begin with the raw amino-acid sequence, 507 residues long: Arabinose import ATP-binding protein AraG (507 aa).

2 consecutive ABC transporter domains span residues 8–243 and 255–499; these read LSFH…MVGR and PHGE…MLRI. 40–47 contacts ATP; it reads GENGAGKS.

The protein belongs to the ABC transporter superfamily. Arabinose importer (TC 3.A.1.2.2) family. The complex is composed of two ATP-binding proteins (AraG), two transmembrane proteins (AraH) and a solute-binding protein (AraF).

It is found in the cell inner membrane. The catalysed reaction is L-arabinose(out) + ATP + H2O = L-arabinose(in) + ADP + phosphate + H(+). Part of the ABC transporter complex AraFGH involved in arabinose import. Responsible for energy coupling to the transport system. The sequence is that of Arabinose import ATP-binding protein AraG from Pectobacterium atrosepticum (strain SCRI 1043 / ATCC BAA-672) (Erwinia carotovora subsp. atroseptica).